Reading from the N-terminus, the 328-residue chain is Malate dehydrogenase (328 aa).

Residue Gly11 to Gly17 coordinates NAD(+). Positions 94 and 100 each coordinate substrate. NAD(+) is bound by residues Asn107, Gln114, and Val131–Asn133. Asn133 and Arg164 together coordinate substrate. The active-site Proton acceptor is His189.

It belongs to the LDH/MDH superfamily. MDH type 2 family.

It carries out the reaction (S)-malate + NAD(+) = oxaloacetate + NADH + H(+). Its function is as follows. Catalyzes the reversible oxidation of malate to oxaloacetate. This is Malate dehydrogenase from Acinetobacter baumannii (strain AB0057).